A 115-amino-acid chain; its full sequence is NADH-ubiquinone oxidoreductase chain 3 (115 aa).

3 helical membrane-spanning segments follow: residues leucine 4–leucine 24, phenylalanine 55–leucine 75, and threonine 86–tryptophan 106.

Belongs to the complex I subunit 3 family. In terms of assembly, core subunit of respiratory chain NADH dehydrogenase (Complex I) which is composed of 45 different subunits. Interacts with TMEM186. Interacts with TMEM242.

The protein resides in the mitochondrion inner membrane. It catalyses the reaction a ubiquinone + NADH + 5 H(+)(in) = a ubiquinol + NAD(+) + 4 H(+)(out). In terms of biological role, core subunit of the mitochondrial membrane respiratory chain NADH dehydrogenase (Complex I) which catalyzes electron transfer from NADH through the respiratory chain, using ubiquinone as an electron acceptor. Essential for the catalytic activity of complex I. The sequence is that of NADH-ubiquinone oxidoreductase chain 3 from Peromyscus gossypinus (Cotton deermouse).